We begin with the raw amino-acid sequence, 258 residues long: Phosphoribosylformylglycinamidine synthase subunit PurQ (258 aa).

The region spanning 7–238 (IGILLMEGTN…QAMYLETEKD (232 aa)) is the Glutamine amidotransferase type-1 domain. Residue C97 is the Nucleophile of the active site. Active-site residues include H220 and E222.

Part of the FGAM synthase complex composed of 1 PurL, 1 PurQ and 2 PurS subunits.

It is found in the cytoplasm. The enzyme catalyses N(2)-formyl-N(1)-(5-phospho-beta-D-ribosyl)glycinamide + L-glutamine + ATP + H2O = 2-formamido-N(1)-(5-O-phospho-beta-D-ribosyl)acetamidine + L-glutamate + ADP + phosphate + H(+). The catalysed reaction is L-glutamine + H2O = L-glutamate + NH4(+). It participates in purine metabolism; IMP biosynthesis via de novo pathway; 5-amino-1-(5-phospho-D-ribosyl)imidazole from N(2)-formyl-N(1)-(5-phospho-D-ribosyl)glycinamide: step 1/2. Part of the phosphoribosylformylglycinamidine synthase complex involved in the purines biosynthetic pathway. Catalyzes the ATP-dependent conversion of formylglycinamide ribonucleotide (FGAR) and glutamine to yield formylglycinamidine ribonucleotide (FGAM) and glutamate. The FGAM synthase complex is composed of three subunits. PurQ produces an ammonia molecule by converting glutamine to glutamate. PurL transfers the ammonia molecule to FGAR to form FGAM in an ATP-dependent manner. PurS interacts with PurQ and PurL and is thought to assist in the transfer of the ammonia molecule from PurQ to PurL. This chain is Phosphoribosylformylglycinamidine synthase subunit PurQ, found in Thermoplasma volcanium (strain ATCC 51530 / DSM 4299 / JCM 9571 / NBRC 15438 / GSS1).